Here is a 260-residue protein sequence, read N- to C-terminus: Cytochrome c oxidase subunit 3 (260 aa).

Residues 1–15 (MTHQTHAYHMVNPSP) lie on the Mitochondrial matrix side of the membrane. Residues 16–34 (WPLTGALSALLMTSGLAMW) traverse the membrane as a helical segment. Topologically, residues 35 to 40 (FHFNST) are mitochondrial intermembrane. A helical transmembrane segment spans residues 41-66 (ALLMIGLTTNMLTMYQWWRDIIREST). Topologically, residues 67 to 72 (FQGHHT) are mitochondrial matrix. The chain crosses the membrane as a helical span at residues 73 to 105 (PAVQKGLRYGMILFIISEVLFFTGFFWAFYHSS). Residues 106-128 (LAPTPELGGCWPPTGIHPLNPLE) are Mitochondrial intermembrane-facing. Residues 129–152 (VPLLNTSVLLASGVSITWAHHSLM) traverse the membrane as a helical segment. Residues 153–155 (EGD) are Mitochondrial matrix-facing. A helical transmembrane segment spans residues 156–183 (RNHMLQALFITITLGVYFTLLQASEYYE). Over 184–190 (APFTISD) the chain is Mitochondrial intermembrane. A helical transmembrane segment spans residues 191-223 (GVYGSTFFVATGFHGLHVIIGSTFLIVCFFRQL). The Mitochondrial matrix portion of the chain corresponds to 224-232 (KFHFTSNHH). The chain crosses the membrane as a helical span at residues 233 to 256 (FGFEAAAWYWHFVDVVWLFLYVSI). Residues 257–260 (YWWG) lie on the Mitochondrial intermembrane side of the membrane.

The protein belongs to the cytochrome c oxidase subunit 3 family. In terms of assembly, component of the cytochrome c oxidase (complex IV, CIV), a multisubunit enzyme composed of 14 subunits. The complex is composed of a catalytic core of 3 subunits MT-CO1, MT-CO2 and MT-CO3, encoded in the mitochondrial DNA, and 11 supernumerary subunits COX4I, COX5A, COX5B, COX6A, COX6B, COX6C, COX7A, COX7B, COX7C, COX8 and NDUFA4, which are encoded in the nuclear genome. The complex exists as a monomer or a dimer and forms supercomplexes (SCs) in the inner mitochondrial membrane with NADH-ubiquinone oxidoreductase (complex I, CI) and ubiquinol-cytochrome c oxidoreductase (cytochrome b-c1 complex, complex III, CIII), resulting in different assemblies (supercomplex SCI(1)III(2)IV(1) and megacomplex MCI(2)III(2)IV(2)).

It localises to the mitochondrion inner membrane. The catalysed reaction is 4 Fe(II)-[cytochrome c] + O2 + 8 H(+)(in) = 4 Fe(III)-[cytochrome c] + 2 H2O + 4 H(+)(out). In terms of biological role, component of the cytochrome c oxidase, the last enzyme in the mitochondrial electron transport chain which drives oxidative phosphorylation. The respiratory chain contains 3 multisubunit complexes succinate dehydrogenase (complex II, CII), ubiquinol-cytochrome c oxidoreductase (cytochrome b-c1 complex, complex III, CIII) and cytochrome c oxidase (complex IV, CIV), that cooperate to transfer electrons derived from NADH and succinate to molecular oxygen, creating an electrochemical gradient over the inner membrane that drives transmembrane transport and the ATP synthase. Cytochrome c oxidase is the component of the respiratory chain that catalyzes the reduction of oxygen to water. Electrons originating from reduced cytochrome c in the intermembrane space (IMS) are transferred via the dinuclear copper A center (CU(A)) of subunit 2 and heme A of subunit 1 to the active site in subunit 1, a binuclear center (BNC) formed by heme A3 and copper B (CU(B)). The BNC reduces molecular oxygen to 2 water molecules using 4 electrons from cytochrome c in the IMS and 4 protons from the mitochondrial matrix. The sequence is that of Cytochrome c oxidase subunit 3 (MT-CO3) from Bos mutus grunniens (Wild yak).